We begin with the raw amino-acid sequence, 109 residues long: Phycoerythrin alpha-2 subunit (109 aa).

(2R,3E)-phycoerythrobilin-binding residues include D52, S53, E63, R64, C67, T72, K74, A75, and K84.

The protein belongs to the phycoerythrin family. As to quaternary structure, heterotetramer of 2 different alpha chains and 2 identical beta chains which form 2 alpha-beta heterodimers within the heterotetramer. The two alpha-beta heterodimers are rotated to an open configuration in contrast to the closed configuration found in other cryptophyte species due to the insertion of a single amino acid, Asp-65, in a conserved region of the alpha chain. In the open form, the central chromophores are not in physical contact but are separated by a water-filled channel. Contains three phycoerythrobilin chromophores with binding mediated by both the alpha and beta subunits.

Its subcellular location is the plastid. The protein localises to the chloroplast thylakoid membrane. Functionally, light-harvesting photosynthetic tetrapyrrole chromophore-protein from the phycobiliprotein complex. This is Phycoerythrin alpha-2 subunit from Hemiselmis andersenii (Cryptophyte alga).